Here is a 272-residue protein sequence, read N- to C-terminus: HTH-type transcriptional repressor AllR (272 aa).

The interval 1 to 20 is disordered; that stretch reads MTEVRRRGRPGQAEPTAQKG. An HTH iclR-type domain is found at 21–83; the sequence is AQALERGIAI…SQLGWWHIGL (63 aa). The segment at residues 43-62 is a DNA-binding region (H-T-H motif); it reads VSDISGSLDLPLSTTFRLLK. The region spanning 98 to 267 is the IclR-ED domain; it reads VLSVAGPFMH…AKDISTALGL (170 aa). Glyoxylate is bound by residues 154–156, D207, C217, and 234–236; these read SGA and SIS.

Negative regulator of allantoin and glyoxylate utilization operons. Binds to the gcl promoter and to the allS-allA intergenic region. This chain is HTH-type transcriptional repressor AllR (allR), found in Salmonella paratyphi A (strain ATCC 9150 / SARB42).